A 218-amino-acid polypeptide reads, in one-letter code: tRNA (guanosine(18)-2'-O)-methyltransferase (218 aa).

Residues threonine 111 and isoleucine 154 each contribute to the S-adenosyl-L-methionine site.

The protein belongs to the class IV-like SAM-binding methyltransferase superfamily. RNA methyltransferase TrmH family.

The enzyme catalyses guanosine(18) in tRNA + S-adenosyl-L-methionine = 2'-O-methylguanosine(18) in tRNA + S-adenosyl-L-homocysteine + H(+). Catalyzes the 2'-O methylation of guanosine at position 18 in tRNA. This chain is tRNA (guanosine(18)-2'-O)-methyltransferase, found in Borreliella burgdorferi (strain ATCC 35210 / DSM 4680 / CIP 102532 / B31) (Borrelia burgdorferi).